Here is a 608-residue protein sequence, read N- to C-terminus: Isocitrate dehydrogenase kinase/phosphatase (608 aa).

Residues 327-333 (APGIKGL) and K348 contribute to the ATP site. D383 is an active-site residue.

It belongs to the AceK family.

The protein resides in the cytoplasm. It carries out the reaction L-seryl-[isocitrate dehydrogenase] + ATP = O-phospho-L-seryl-[isocitrate dehydrogenase] + ADP + H(+). Bifunctional enzyme which can phosphorylate or dephosphorylate isocitrate dehydrogenase (IDH) on a specific serine residue. This is a regulatory mechanism which enables bacteria to bypass the Krebs cycle via the glyoxylate shunt in response to the source of carbon. When bacteria are grown on glucose, IDH is fully active and unphosphorylated, but when grown on acetate or ethanol, the activity of IDH declines drastically concomitant with its phosphorylation. This Burkholderia ambifaria (strain ATCC BAA-244 / DSM 16087 / CCUG 44356 / LMG 19182 / AMMD) (Burkholderia cepacia (strain AMMD)) protein is Isocitrate dehydrogenase kinase/phosphatase.